Reading from the N-terminus, the 107-residue chain is NADH-quinone oxidoreductase subunit K 2 (107 aa).

Helical transmembrane passes span 3-23 (LPIYYPLGLGALLFGLGLWGA), 30-50 (VRILMFIEIMLNGVNLNLITF), and 67-87 (ILTLFVMTVAAAEASVGLAII).

The protein belongs to the complex I subunit 4L family. As to quaternary structure, NDH-1 is composed of 14 different subunits. Subunits NuoA, H, J, K, L, M, N constitute the membrane sector of the complex.

Its subcellular location is the cell membrane. It catalyses the reaction a quinone + NADH + 5 H(+)(in) = a quinol + NAD(+) + 4 H(+)(out). NDH-1 shuttles electrons from NADH, via FMN and iron-sulfur (Fe-S) centers, to quinones in the respiratory chain. The immediate electron acceptor for the enzyme in this species is believed to be a menaquinone. Couples the redox reaction to proton translocation (for every two electrons transferred, four hydrogen ions are translocated across the cytoplasmic membrane), and thus conserves the redox energy in a proton gradient. This chain is NADH-quinone oxidoreductase subunit K 2, found in Symbiobacterium thermophilum (strain DSM 24528 / JCM 14929 / IAM 14863 / T).